A 465-amino-acid chain; its full sequence is Cysteine--tRNA ligase (465 aa).

Residue Cys29 coordinates Zn(2+). Positions 31–41 (PTVYNYIHIGN) match the 'HIGH' region motif. Positions 209, 234, and 238 each coordinate Zn(2+). Positions 266–270 (KMSKS) match the 'KMSKS' region motif. Position 269 (Lys269) interacts with ATP. Ser270 carries the phosphoserine modification.

It belongs to the class-I aminoacyl-tRNA synthetase family. In terms of assembly, monomer. It depends on Zn(2+) as a cofactor.

It localises to the cytoplasm. The catalysed reaction is tRNA(Cys) + L-cysteine + ATP = L-cysteinyl-tRNA(Cys) + AMP + diphosphate. The sequence is that of Cysteine--tRNA ligase from Bacillus anthracis (strain A0248).